The chain runs to 180 residues: Large ribosomal subunit protein uL6 (180 aa).

This sequence belongs to the universal ribosomal protein uL6 family. In terms of assembly, part of the 50S ribosomal subunit.

Its function is as follows. This protein binds to the 23S rRNA, and is important in its secondary structure. It is located near the subunit interface in the base of the L7/L12 stalk, and near the tRNA binding site of the peptidyltransferase center. This Clostridium kluyveri (strain NBRC 12016) protein is Large ribosomal subunit protein uL6.